Reading from the N-terminus, the 142-residue chain is Putative pre-16S rRNA nuclease (142 aa).

This sequence belongs to the YqgF nuclease family.

It localises to the cytoplasm. Its function is as follows. Could be a nuclease involved in processing of the 5'-end of pre-16S rRNA. The protein is Putative pre-16S rRNA nuclease of Staphylococcus haemolyticus (strain JCSC1435).